The chain runs to 294 residues: MHRHHNGLKTAVLFGGIWGVLLLIGAFLASSFRSPGVLLVFVVIGLATSAYSYWNSAGLALRAMRARPVSEAEQPGMHRIVRELSTAARQPMPQLYVSPTMAPNAFATGRNPENAAVCCTEGILQLLDERELRGVLGHELMHVYNRDILTSSVAGALAGVITSIAQFGVFFGSALGGGRDGEERANPLALLLLSLMAPLAASVIQLAISRTREYDADEDGARLTGDPLALASALRKLELGTRQLPLPPERELVNSSHMMIANPFRGQGVARLFSTHPPMAERIARLEALAGYRR.

2 helical membrane-spanning segments follow: residues 12 to 32 (VLFG…ASSF) and 34 to 54 (SPGV…YSYW). His138 is a Zn(2+) binding site. Residue Glu139 is part of the active site. His142 is a binding site for Zn(2+). Helical transmembrane passes span 152–172 (SVAG…VFFG) and 188–208 (LALL…QLAI). A Zn(2+)-binding site is contributed by Glu213.

This sequence belongs to the peptidase M48B family. It depends on Zn(2+) as a cofactor.

The protein localises to the cell membrane. This Kineococcus radiotolerans (strain ATCC BAA-149 / DSM 14245 / SRS30216) protein is Protease HtpX homolog.